The following is a 374-amino-acid chain: MNTNRKKMKVHIGGYVLILALTVSVILQQPELVTGQARVPAMFVLGDSLVDAGNNNFLQTVARANFLPYGIDMNYQPTGRFSNGLTFIDLLARLLEIPSPPPFADPTTSGNRILQGVNYASAAAGILDVSGYNYGGRFSLNQQMVNLETTLSQLRTMMSPQNFTDYLARSLVVLVFGSNDYINNYLMPNLYDSSIRFRPPDFANLLLSQYARQLLTLYSLGLRKIFIPGVAPLGCIPNQRARGISPPDRCVDSVNQILGTFNQGLKSLVDQLNQRSPGAIYVYGNTYSAIGDILNNPAAYGFSVVDRACCGIGRNQGQITCLPLQTPCPNRNQYVFWDAFHPTQTANSILARRAFYGPPSDAYPVNVQQMTLLH.

An N-terminal signal peptide occupies residues 1–28; it reads MNTNRKKMKVHIGGYVLILALTVSVILQ. Serine 48 functions as the Nucleophile in the catalytic mechanism. N-linked (GlcNAc...) asparagine glycosylation is present at asparagine 162. Residues aspartate 338 and histidine 341 contribute to the active site.

It belongs to the 'GDSL' lipolytic enzyme family.

Its subcellular location is the secreted. The sequence is that of GDSL esterase/lipase At1g71250 from Arabidopsis thaliana (Mouse-ear cress).